We begin with the raw amino-acid sequence, 529 residues long: Delayed-rectifier potassium channel regulatory subunit KCNS1 (529 aa).

The Cytoplasmic segment spans residues 1-217 (MLMLLVRGTH…LTMENPGYSL (217 aa)). A helical transmembrane segment spans residues 218 to 239 (PSKLFSCVSISVVLASIAAMCI). The Extracellular segment spans residues 240-270 (HSLPEYQAREAAAAVAAVAAGRSPEGVRDDP). Residues 271-293 (VLRRLEYFCIAWFSFEVSSRLLL) form a helical membrane-spanning segment. Over 294-304 (APSTRNFFCHP) the chain is Cytoplasmic. A helical membrane pass occupies residues 305 to 322 (LNLIDIVSVLPFYLTLLA). Residues 323–340 (GVALGDQGGTGGKELGHL) are Extracellular-facing. A helical; Voltage-sensor transmembrane segment spans residues 341 to 361 (GKVVQVFRLMRIFRVLKLARH). The Cytoplasmic portion of the chain corresponds to 362 to 376 (STGLRSLGATLKHSY). A helical membrane pass occupies residues 377 to 398 (REVGILLLYLAVGVSVFSGVAY). The Extracellular segment spans residues 399–411 (TAEKEEDVGFNTI). An intramembrane region (helical) is located at residues 412 to 423 (PACWWWGTVSMT). Residues 424–429 (TVGYGD) carry the Selectivity filter motif. Residues 424 to 431 (TVGYGDVV) lie within the membrane without spanning it. At 432–438 (PVTVAGK) the chain is on the extracellular side. A helical transmembrane segment spans residues 439-467 (LAASGCILGGILVVALPITIIFNKFSHFY). The Cytoplasmic segment spans residues 468-529 (RRQKALEAAV…PSEPPHPQMY (62 aa)). Residues 496 to 529 (SEASLETSRETSQEGRSADLETQAPSEPPHPQMY) are disordered. The span at 502-514 (TSRETSQEGRSAD) shows a compositional bias: basic and acidic residues.

Belongs to the potassium channel family. S (TC 1.A.1.2) subfamily. Kv9.1/KCNS1 sub-subfamily. Heterotetramer with KCNB1. Heterotetramer with KCNB2. Does not form homomultimers.

The protein localises to the cell membrane. Its function is as follows. Potassium channel regulatory subunit that modulate the delayed rectifier voltage-gated potassium channel activity of KCNB1 and KCNB2 by altering their kinetics, expression levels, and shifting the half-inactivation potential to more polarized values. While it does not form functional channels on its own, it can form functional heterotetrameric channels with KCNB1 and KCNB2. Each regulatory subunit has unique regulatory properties that can lead to extensive inhibition, significant changes in kinetics, and/or substantial shifts in the voltage dependencies of the inactivation process. The polypeptide is Delayed-rectifier potassium channel regulatory subunit KCNS1 (Papio anubis (Olive baboon)).